The primary structure comprises 473 residues: Ribulose bisphosphate carboxylase large chain (473 aa).

Substrate is bound by residues asparagine 116 and threonine 166. Lysine 168 functions as the Proton acceptor in the catalytic mechanism. Lysine 170 contacts substrate. Positions 194, 196, and 197 each coordinate Mg(2+). Position 194 is an N6-carboxylysine (lysine 194). Residue histidine 287 is the Proton acceptor of the active site. Arginine 288, histidine 320, and serine 372 together coordinate substrate.

This sequence belongs to the RuBisCO large chain family. Type I subfamily. Heterohexadecamer of 8 large chains and 8 small chains. Requires Mg(2+) as cofactor.

It carries out the reaction 2 (2R)-3-phosphoglycerate + 2 H(+) = D-ribulose 1,5-bisphosphate + CO2 + H2O. The catalysed reaction is D-ribulose 1,5-bisphosphate + O2 = 2-phosphoglycolate + (2R)-3-phosphoglycerate + 2 H(+). In terms of biological role, ruBisCO catalyzes two reactions: the carboxylation of D-ribulose 1,5-bisphosphate, the primary event in carbon dioxide fixation, as well as the oxidative fragmentation of the pentose substrate. Both reactions occur simultaneously and in competition at the same active site. The chain is Ribulose bisphosphate carboxylase large chain from Hydrogenophaga pseudoflava (Pseudomonas carboxydoflava).